A 767-amino-acid chain; its full sequence is 5-methyltetrahydropteroyltriglutamate--homocysteine methyltransferase (767 aa).

Residue lysine 126 participates in 5-methyltetrahydropteroyltri-L-glutamate binding. L-homocysteine-binding positions include 445-447 (IGS) and glutamate 498. L-methionine is bound by residues 445–447 (IGS) and glutamate 498. 5-methyltetrahydropteroyltri-L-glutamate contacts are provided by residues 529 to 530 (RC) and tryptophan 575. Aspartate 613 contributes to the L-homocysteine binding site. Aspartate 613 provides a ligand contact to L-methionine. Residue glutamate 619 coordinates 5-methyltetrahydropteroyltri-L-glutamate. Residues histidine 655, cysteine 657, and glutamate 679 each contribute to the Zn(2+) site. The active-site Proton donor is histidine 708. Cysteine 740 contributes to the Zn(2+) binding site.

It belongs to the vitamin-B12 independent methionine synthase family. Requires Zn(2+) as cofactor.

The enzyme catalyses 5-methyltetrahydropteroyltri-L-glutamate + L-homocysteine = tetrahydropteroyltri-L-glutamate + L-methionine. It participates in amino-acid biosynthesis; L-methionine biosynthesis via de novo pathway; L-methionine from L-homocysteine (MetE route): step 1/1. Its function is as follows. Catalyzes the transfer of a methyl group from 5-methyltetrahydrofolate to homocysteine resulting in methionine formation. This chain is 5-methyltetrahydropteroyltriglutamate--homocysteine methyltransferase, found in Psychromonas ingrahamii (strain DSM 17664 / CCUG 51855 / 37).